The sequence spans 236 residues: Methylosome subunit pICln (236 aa).

S2 is subject to N-acetylserine. The disordered stretch occupies residues 88–109; it reads EESKEPPSDEDEEDNDDIEPIS. Residues S95, S143, S192, S194, S197, and S209 each carry the phosphoserine modification. The segment covering 95 to 107 has biased composition (acidic residues); it reads SDEDEEDNDDIEP. Residue T222 is modified to Phosphothreonine.

Belongs to the pICln (TC 1.A.47) family. Component of the methylosome, a 20S complex containing at least PRMT5/SKB1, WDR77/MEP50 and CLNS1A/pICln. May mediate SNRPD1 and SNRPD3 methylation. Forms a 6S pICln-Sm complex composed of CLNS1A/pICln, SNRPD1, SNRPD2, SNRPE, SNRPF and SNRPG; ring-like structure where CLNS1A/pICln mimics additional Sm proteins and which is unable to assemble into the core snRNP. Interacts with LSM10 and LSM11.

It localises to the cytoplasm. The protein resides in the cytosol. Its subcellular location is the nucleus. The protein localises to the cytoskeleton. Involved in both the assembly of spliceosomal snRNPs and the methylation of Sm proteins. Chaperone that regulates the assembly of spliceosomal U1, U2, U4 and U5 small nuclear ribonucleoproteins (snRNPs), the building blocks of the spliceosome, and thereby plays an important role in the splicing of cellular pre-mRNAs. Most spliceosomal snRNPs contain a common set of Sm proteins SNRPB, SNRPD1, SNRPD2, SNRPD3, SNRPE, SNRPF and SNRPG that assemble in a heptameric protein ring on the Sm site of the small nuclear RNA to form the core snRNP (Sm core). In the cytosol, the Sm proteins SNRPD1, SNRPD2, SNRPE, SNRPF and SNRPG are trapped in an inactive 6S pICln-Sm complex by the chaperone CLNS1A that controls the assembly of the core snRNP. Dissociation by the SMN complex of CLNS1A from the trapped Sm proteins and their transfer to an SMN-Sm complex triggers the assembly of core snRNPs and their transport to the nucleus. This is Methylosome subunit pICln (Clns1a) from Mus musculus (Mouse).